A 1079-amino-acid polypeptide reads, in one-letter code: Error-prone DNA polymerase (1079 aa).

This sequence belongs to the DNA polymerase type-C family. DnaE2 subfamily.

It localises to the cytoplasm. It catalyses the reaction DNA(n) + a 2'-deoxyribonucleoside 5'-triphosphate = DNA(n+1) + diphosphate. Functionally, DNA polymerase involved in damage-induced mutagenesis and translesion synthesis (TLS). It is not the major replicative DNA polymerase. The sequence is that of Error-prone DNA polymerase from Ralstonia pickettii (strain 12J).